The following is a 479-amino-acid chain: Muscarinic acetylcholine receptor M4 (479 aa).

At 1–31 (MANFTPVNGSSGNQSVRLVTSSSHNRYETVE) the chain is on the extracellular side. 2 N-linked (GlcNAc...) asparagine glycosylation sites follow: Asn8 and Asn13. The chain crosses the membrane as a helical span at residues 32–54 (MVFIATVTGSLSLVTVVGNILVM). Residues 55–68 (LSIKVNRQLQTVNN) are Cytoplasmic-facing. A helical membrane pass occupies residues 69–89 (YFLFSLACADLIIGAFSMNLY). Residues 90-106 (TVYIIKGYWPLGAVVCD) are Extracellular-facing. A disulfide bridge links Cys105 with Cys185. Residues 107-128 (LWLALDYVVSNASVMNLLIISF) traverse the membrane as a helical segment. Residues 129 to 148 (DRYFCVTKPLTYPARRTTKM) lie on the Cytoplasmic side of the membrane. Residues 149 to 171 (AGLMIAAAWVLSFVLWAPAILFW) form a helical membrane-spanning segment. The Extracellular segment spans residues 172–193 (QFVVGKRTVPDNQCFIQFLSNP). Residues 194–216 (AVTFGTAIAAFYLPVVIMTVLYI) traverse the membrane as a helical segment. Residues 217 to 401 (HISLASRSRV…AARERKVTRT (185 aa)) are Cytoplasmic-facing. Residues 271 to 333 (KLEEAPPPAL…PAPPLQPRAL (63 aa)) are disordered. Residues 275 to 286 (APPPALPPPPRP) show a composition bias toward pro residues. Residues 294–304 (NESSSGSATQN) are compositionally biased toward polar residues. A helical transmembrane segment spans residues 402–422 (IFAILLAFILTWTPYNVMVLV). Over 423-436 (NTFCQSCIPDTVWS) the chain is Extracellular. The chain crosses the membrane as a helical span at residues 437 to 456 (IGYWLCYVNSTINPACYALC). Topologically, residues 457 to 479 (NATFKKTFRHLLLCQYRNIGTAR) are cytoplasmic. Phosphothreonine occurs at positions 459, 463, and 477.

The protein belongs to the G-protein coupled receptor 1 family. Muscarinic acetylcholine receptor subfamily. CHRM4 sub-subfamily.

It localises to the cell membrane. It is found in the postsynaptic cell membrane. Functionally, the muscarinic acetylcholine receptor mediates various cellular responses, including inhibition of adenylate cyclase, breakdown of phosphoinositides and modulation of potassium channels through the action of G proteins. Primary transducing effect is inhibition of adenylate cyclase. The protein is Muscarinic acetylcholine receptor M4 (CHRM4) of Homo sapiens (Human).